A 153-amino-acid polypeptide reads, in one-letter code: Large ribosomal subunit protein uL22 (153 aa).

It belongs to the universal ribosomal protein uL22 family. Part of the 50S ribosomal subunit.

This protein binds specifically to 23S rRNA. It makes multiple contacts with different domains of the 23S rRNA in the assembled 50S subunit and ribosome. Functionally, the globular domain of the protein is located near the polypeptide exit tunnel on the outside of the subunit, while an extended beta-hairpin is found that lines the wall of the exit tunnel in the center of the 70S ribosome. The protein is Large ribosomal subunit protein uL22 of Methanococcus aeolicus (strain ATCC BAA-1280 / DSM 17508 / OCM 812 / Nankai-3).